We begin with the raw amino-acid sequence, 151 residues long: Aspartate carbamoyltransferase regulatory chain (151 aa).

Residues cysteine 107, cysteine 112, cysteine 135, and cysteine 138 each coordinate Zn(2+).

It belongs to the PyrI family. Contains catalytic and regulatory chains. It depends on Zn(2+) as a cofactor.

Involved in allosteric regulation of aspartate carbamoyltransferase. This is Aspartate carbamoyltransferase regulatory chain from Thermococcus gammatolerans (strain DSM 15229 / JCM 11827 / EJ3).